Consider the following 459-residue polypeptide: Argininosuccinate lyase (459 aa).

This sequence belongs to the lyase 1 family. Argininosuccinate lyase subfamily.

It is found in the cytoplasm. It catalyses the reaction 2-(N(omega)-L-arginino)succinate = fumarate + L-arginine. The protein operates within amino-acid biosynthesis; L-arginine biosynthesis; L-arginine from L-ornithine and carbamoyl phosphate: step 3/3. The protein is Argininosuccinate lyase of Desulforudis audaxviator (strain MP104C).